A 272-amino-acid polypeptide reads, in one-letter code: Orotidine 5'-phosphate decarboxylase (272 aa).

The Proton donor role is filled by K95.

Belongs to the OMP decarboxylase family. Type 2 subfamily.

It carries out the reaction orotidine 5'-phosphate + H(+) = UMP + CO2. Its pathway is pyrimidine metabolism; UMP biosynthesis via de novo pathway; UMP from orotate: step 2/2. This Cupriavidus metallidurans (strain ATCC 43123 / DSM 2839 / NBRC 102507 / CH34) (Ralstonia metallidurans) protein is Orotidine 5'-phosphate decarboxylase.